Reading from the N-terminus, the 286-residue chain is MNLKQKWDVYSRLTRLDRPIGTLLLLWPCLMALVLAAGGMPDIKVLIIFIIGVVIMRACGCIINDYADRDLDSHVERTKSRPLASGEISTKEALLLFVILGLAAFGLVLLLNGLVVKLSVVGIILTIIYPFTKRVTNMPQMFLGVVWSWSIPMAYAAQTGEVPIEAWWLFAANWFWTVAYDTMYAMVDRDDDLKVGIKSTAILFGKYDRQIIGLFQLAALLCFIAAGWSADRGLLYGLGLLTFVGFSTYQQMLIFGRERAPCFKAFLNNNWAGLALFVGLGADYLF.

Helical transmembrane passes span 21–40, 96–116, 142–162, 167–187, 210–230, 235–255, and 266–286; these read GTLL…AGGM, LFVI…GLVV, FLGV…TGEV, WWLF…YAMV, QIIG…GWSA, LYGL…MLIF, and FLNN…DYLF.

It belongs to the UbiA prenyltransferase family. Requires Mg(2+) as cofactor.

The protein resides in the cell inner membrane. The catalysed reaction is all-trans-octaprenyl diphosphate + 4-hydroxybenzoate = 4-hydroxy-3-(all-trans-octaprenyl)benzoate + diphosphate. The protein operates within cofactor biosynthesis; ubiquinone biosynthesis. Its function is as follows. Catalyzes the prenylation of para-hydroxybenzoate (PHB) with an all-trans polyprenyl group. Mediates the second step in the final reaction sequence of ubiquinone-8 (UQ-8) biosynthesis, which is the condensation of the polyisoprenoid side chain with PHB, generating the first membrane-bound Q intermediate 3-octaprenyl-4-hydroxybenzoate. The protein is 4-hydroxybenzoate octaprenyltransferase of Shewanella sp. (strain ANA-3).